The sequence spans 291 residues: Undecaprenyl-diphosphatase (291 aa).

The next 8 membrane-spanning stretches (helical) occupy residues 1 to 21 (MLIL…LTEF), 48 to 68 (SAFT…AWVF), 99 to 119 (LHII…DDVI), 123 to 143 (LFSV…MIIA), 159 to 179 (INYF…WPGF), 200 to 220 (SDFT…LSLV), 236 to 256 (LGFL…LYLI), and 269 to 289 (IVLV…QGIT).

It belongs to the UppP family.

It is found in the cell membrane. The enzyme catalyses di-trans,octa-cis-undecaprenyl diphosphate + H2O = di-trans,octa-cis-undecaprenyl phosphate + phosphate + H(+). In terms of biological role, catalyzes the dephosphorylation of undecaprenyl diphosphate (UPP). Confers resistance to bacitracin. This Staphylococcus saprophyticus subsp. saprophyticus (strain ATCC 15305 / DSM 20229 / NCIMB 8711 / NCTC 7292 / S-41) protein is Undecaprenyl-diphosphatase.